A 350-amino-acid polypeptide reads, in one-letter code: Ion-translocating oxidoreductase complex subunit D (350 aa).

Helical transmembrane passes span Phe-36 to Leu-56, Pro-68 to Ser-88, Ile-89 to Val-109, and Ile-120 to Thr-140. Thr-185 carries the post-translational modification FMN phosphoryl threonine. Helical transmembrane passes span Gly-212–Leu-232, Trp-239–Leu-259, Ile-265–Thr-285, Ala-291–Ile-311, and Gly-315–Ile-335.

This sequence belongs to the NqrB/RnfD family. The complex is composed of six subunits: RnfA, RnfB, RnfC, RnfD, RnfE and RnfG. Requires FMN as cofactor.

Its subcellular location is the cell inner membrane. In terms of biological role, part of a membrane-bound complex that couples electron transfer with translocation of ions across the membrane. The polypeptide is Ion-translocating oxidoreductase complex subunit D (Shewanella piezotolerans (strain WP3 / JCM 13877)).